Here is a 378-residue protein sequence, read N- to C-terminus: 23S rRNA (uracil(747)-C(5))-methyltransferase RlmC (378 aa).

Residues Cys-3, Cys-11, Cys-14, and Cys-87 each coordinate [4Fe-4S] cluster. Positions 212, 241, 262, and 309 each coordinate S-adenosyl-L-methionine. Cys-336 serves as the catalytic Nucleophile.

Belongs to the class I-like SAM-binding methyltransferase superfamily. RNA M5U methyltransferase family. RlmC subfamily.

It catalyses the reaction uridine(747) in 23S rRNA + S-adenosyl-L-methionine = 5-methyluridine(747) in 23S rRNA + S-adenosyl-L-homocysteine + H(+). Functionally, catalyzes the formation of 5-methyl-uridine at position 747 (m5U747) in 23S rRNA. The chain is 23S rRNA (uracil(747)-C(5))-methyltransferase RlmC from Shewanella halifaxensis (strain HAW-EB4).